A 385-amino-acid chain; its full sequence is tRNA-specific 2-thiouridylase MnmA (385 aa).

Residues 29-36 and Leu55 contribute to the ATP site; that span reads GLSGGVDS. Cys116 (nucleophile) is an active-site residue. Cys116 and Cys225 form a disulfide bridge. Gly141 is a binding site for ATP. The interaction with tRNA stretch occupies residues 175–177; that stretch reads KDQ. The active-site Cysteine persulfide intermediate is the Cys225. An interaction with tRNA region spans residues 330-331; sequence RY.

The protein belongs to the MnmA/TRMU family.

Its subcellular location is the cytoplasm. The enzyme catalyses S-sulfanyl-L-cysteinyl-[protein] + uridine(34) in tRNA + AH2 + ATP = 2-thiouridine(34) in tRNA + L-cysteinyl-[protein] + A + AMP + diphosphate + H(+). In terms of biological role, catalyzes the 2-thiolation of uridine at the wobble position (U34) of tRNA, leading to the formation of s(2)U34. The protein is tRNA-specific 2-thiouridylase MnmA of Prochlorococcus marinus (strain AS9601).